Reading from the N-terminus, the 275-residue chain is NH(3)-dependent NAD(+) synthetase (275 aa).

ATP is bound at residue 50 to 57 (GISGGVDS). Residue D56 coordinates Mg(2+). Residue R147 coordinates deamido-NAD(+). ATP is bound at residue T167. Residue E172 coordinates Mg(2+). K180 and D187 together coordinate deamido-NAD(+). 2 residues coordinate ATP: K196 and T218. Residue 267 to 268 (HK) coordinates deamido-NAD(+).

The protein belongs to the NAD synthetase family. Homodimer.

The enzyme catalyses deamido-NAD(+) + NH4(+) + ATP = AMP + diphosphate + NAD(+) + H(+). Its pathway is cofactor biosynthesis; NAD(+) biosynthesis; NAD(+) from deamido-NAD(+) (ammonia route): step 1/1. In terms of biological role, catalyzes the ATP-dependent amidation of deamido-NAD to form NAD. Uses ammonia as a nitrogen source. This Pseudomonas putida (strain ATCC 47054 / DSM 6125 / CFBP 8728 / NCIMB 11950 / KT2440) protein is NH(3)-dependent NAD(+) synthetase.